We begin with the raw amino-acid sequence, 525 residues long: D-arabinono-1,4-lactone oxidase (525 aa).

Residues 23–197 enclose the FAD-binding PCMH-type domain; it reads YSCRPQLYFQ…VKATIRVIPE (175 aa). Residue His60 is modified to Pros-8alpha-FAD histidine.

This sequence belongs to the oxygen-dependent FAD-linked oxidoreductase family. It depends on FAD as a cofactor.

The protein resides in the mitochondrion membrane. It catalyses the reaction D-arabinono-1,4-lactone + O2 = dehydro-D-arabinono-1,4-lactone + H2O2 + H(+). The protein operates within cofactor biosynthesis; D-erythroascorbate biosynthesis; dehydro-D-arabinono-1,4-lactone from D-arabinose: step 2/2. The chain is D-arabinono-1,4-lactone oxidase (ALO1) from Kluyveromyces lactis (strain ATCC 8585 / CBS 2359 / DSM 70799 / NBRC 1267 / NRRL Y-1140 / WM37) (Yeast).